A 118-amino-acid chain; its full sequence is MTHWHITSWVVALILVFVSYGLYGSGKAKGAKITHMILRLFYIIIILTGAELFVRFANWNGEYAGKMLLGIITIGLMEMLVIRKKKGKSTGGLWIGFIIVLVLTVLLGLHLPIGFHVF.

The next 4 helical transmembrane spans lie at Trp4 to Gly24, Ile33 to Phe53, Glu62 to Ile82, and Leu93 to Ile113.

This sequence belongs to the UPF0344 family.

It localises to the cell membrane. This Bacillus velezensis (strain DSM 23117 / BGSC 10A6 / LMG 26770 / FZB42) (Bacillus amyloliquefaciens subsp. plantarum) protein is UPF0344 protein RBAM_010920.